The chain runs to 35 residues: Ranatuerin-2SPb (35 aa).

The cysteines at positions 28 and 33 are disulfide-linked.

In terms of tissue distribution, expressed by the skin glands.

The protein localises to the secreted. Antibacterial activity against Gram-positive bacterium S.aureus. Shows no detectable hemolytic activity towards human erythrocytes. The chain is Ranatuerin-2SPb from Lithobates septentrionalis (Mink frog).